The primary structure comprises 800 residues: Metabotropic glutamate receptor-like protein C (800 aa).

An N-terminal signal peptide occupies residues 1–21 (MKMKIIFLILILIFSINIIKC). Residues 22–392 (DKEFKMLTLL…EVEFSQSLQY (371 aa)) are Extracellular-facing. N-linked (GlcNAc...) asparagine glycosylation is found at N69, N107, N166, N258, N276, N302, and N345. Residues 393-413 (GFSITTGVLIAITIIMMLGIV) form a helical membrane-spanning segment. The Cytoplasmic portion of the chain corresponds to 414 to 426 (RYKSTPSIRSASP). The chain crosses the membrane as a helical span at residues 427 to 447 (IFLNFILAGGIIVYIGIIVWV). Residues 448 to 463 (GPANDHQCNARLWLVT) lie on the Extracellular side of the membrane. A helical membrane pass occupies residues 464 to 484 (LGFSTLIGSLVVKNFRIWLIF). The Cytoplasmic segment spans residues 485-499 (DNPELKSISITNYQL). Residues 500-520 (FPWVGACLVINIILMSILTSV) form a helical membrane-spanning segment. The Extracellular segment spans residues 521–551 (GDLREIDAQGIDSLGKYEFMKVCKMNSSGAS). N546 carries an N-linked (GlcNAc...) asparagine glycan. A helical membrane pass occupies residues 552–572 (TLYTILAYFAALLLVGVFVSW). Topologically, residues 573–586 (KIRIVDIQEFNESK) are cytoplasmic. A helical membrane pass occupies residues 587–607 (AIANTLYAISFCLFVIVPLMI). Residues 608–616 (SPQDKQSET) lie on the Extracellular side of the membrane. The helical transmembrane segment at 617–637 (IVLCTAGLFITTAALLIIFTP) threads the bilayer. Residues 638–800 (KFWRVFTLGD…NDTEEEDKNQ (163 aa)) are Cytoplasmic-facing. Disordered regions lie at residues 658–694 (QSNVATARAESSKSSSGPKLNRRGNLVSDDFTDTETS) and 718–800 (EFDD…DKNQ). A compositionally biased stretch (acidic residues) spans 718 to 732 (EFDDNNIEQDNDNDN). Positions 733 to 774 (DNNNNNNNNNNNNNNNNNNNNNNNNNNNNNNNNNNNNNNNNN) are enriched in low complexity. Residues 781 to 791 (NDEKVEEKQQN) show a composition bias toward basic and acidic residues.

The protein in the N-terminal section; belongs to the BMP lipoprotein family. In the C-terminal section; belongs to the G-protein coupled receptor 3 family. GABA-B receptor subfamily.

The protein localises to the membrane. This chain is Metabotropic glutamate receptor-like protein C (grlC), found in Dictyostelium discoideum (Social amoeba).